Reading from the N-terminus, the 214-residue chain is MIKSTLIYREDGLPLCTSVDNENDPSLFEQKQKVKIVVSRLTPQSATEATLESGSFEIHYLKKSMVYYFVICESGYPRNLAFSYLNDIAQEFEHSFANEYPKPTVRPYQFVNFDNFLQMTKKSYSDKKVQDNLDQLNQELVGVKQIMSKNIEDLLYRGDSLDKMSDMSSSLKETSKRYRKSAQKINFDLLISQYAPIVIVAFFFVFLFWWIFLK.

The Cytoplasmic segment spans residues 1-192 (MIKSTLIYRE…QKINFDLLIS (192 aa)). Residues 6–117 (LIYREDGLPL…YQFVNFDNFL (112 aa)) form the Longin domain. Residues 132–192 (NLDQLNQELV…QKINFDLLIS (61 aa)) form the v-SNARE coiled-coil homology domain. The residue at position 160 (serine 160) is a Phosphoserine. The chain crosses the membrane as a helical; Anchor for type IV membrane protein span at residues 193–213 (QYAPIVIVAFFFVFLFWWIFL). Residue lysine 214 is a topological domain, vesicular.

This sequence belongs to the synaptobrevin family. Component of two distinct SNARE complexes consisting of SED5, BOS1, BET1 and SEC22 or UFE1, USE1, SEC20 and SEC22. YKT6 can probably replace SEC22 as subunit of either complex. Interacts with SEC24, YIF1 and YIP1.

It localises to the membrane. The protein localises to the endoplasmic reticulum membrane. The protein resides in the golgi apparatus membrane. Functionally, nonessential SNARE involved in targeting and fusion of ER-derived transport vesicles with the Golgi complex as well as Golgi-derived retrograde transport vesicles with the ER. This Saccharomyces cerevisiae (strain ATCC 204508 / S288c) (Baker's yeast) protein is Protein transport protein SEC22 (SEC22).